A 264-amino-acid polypeptide reads, in one-letter code: MKPYLELIQKILDTGVERDDRTGTGTWSIFGHQMRFDLRQGFPLITTKKLHIRAIFIELLWFLRGETNVKYLHDHGVTIWDEWADEQGELGPIYGYQWRSWPLPDGGYLDQMAKTLTQIRNHPHSRRHVVVAYNPACVDEMALPPCHALFQFYVAQGRLSCQLYQRSADVFLGVPFNIASYALLTHLIAQQCDLDVGEFVWTGGDVHLYRNHLEPARLQLTREPLSLPHLRIKRRPPSLFEYQYDDLEIVDYQSYPAIKAAISV.

Arg-21 provides a ligand contact to dUMP. His-51 lines the (6R)-5,10-methylene-5,6,7,8-tetrahydrofolate pocket. 126-127 (RR) contributes to the dUMP binding site. Cys-146 (nucleophile) is an active-site residue. DUMP is bound by residues 166 to 169 (RSAD), Asn-177, and 207 to 209 (HLY). A (6R)-5,10-methylene-5,6,7,8-tetrahydrofolate-binding site is contributed by Asp-169. Ser-263 contacts (6R)-5,10-methylene-5,6,7,8-tetrahydrofolate.

Belongs to the thymidylate synthase family. Bacterial-type ThyA subfamily. Homodimer.

Its subcellular location is the cytoplasm. It catalyses the reaction dUMP + (6R)-5,10-methylene-5,6,7,8-tetrahydrofolate = 7,8-dihydrofolate + dTMP. It participates in pyrimidine metabolism; dTTP biosynthesis. Its function is as follows. Catalyzes the reductive methylation of 2'-deoxyuridine-5'-monophosphate (dUMP) to 2'-deoxythymidine-5'-monophosphate (dTMP) while utilizing 5,10-methylenetetrahydrofolate (mTHF) as the methyl donor and reductant in the reaction, yielding dihydrofolate (DHF) as a by-product. This enzymatic reaction provides an intracellular de novo source of dTMP, an essential precursor for DNA biosynthesis. This chain is Thymidylate synthase, found in Nitrosococcus oceani (strain ATCC 19707 / BCRC 17464 / JCM 30415 / NCIMB 11848 / C-107).